The primary structure comprises 195 residues: Interferon tau (195 aa).

The signal sequence occupies residues 1 to 23; that stretch reads MAFVLSLLMALVLASYSPGGSLG. Cystine bridges form between Cys-24–Cys-122 and Cys-52–Cys-162.

This sequence belongs to the alpha/beta interferon family. IFN-alphaII subfamily. In terms of tissue distribution, constitutively and exclusively expressed in the mononuclear cells of the extraembryonic trophectoderm.

The protein localises to the secreted. In terms of biological role, paracrine hormone primarily responsible for maternal recognition of pregnancy. Interacts with endometrial receptors, probably type I interferon receptors, and blocks estrogen receptor expression, preventing the estrogen-induced increase in oxytocin receptor expression in the endometrium. This results in the suppression of the pulsatile endometrial release of the luteolytic hormone prostaglandin F2-alpha, hindering the regression of the corpus luteum (luteolysis) and therefore a return to ovarian cyclicity. This, and a possible direct effect of IFN-tau on prostaglandin synthesis, leads in turn to continued ovarian progesterone secretion, which stimulates the secretion by the endometrium of the nutrients required for the growth of the conceptus. In summary, displays particularly high antiviral and antiproliferative potency concurrently with particular weak cytotoxicity, high antiluteolytic activity and immunomodulatory properties. In contrast with other IFNs, IFN-tau is not virally inducible. The protein is Interferon tau (IFNT) of Cervus elaphus (Red deer).